We begin with the raw amino-acid sequence, 407 residues long: Peptide chain release factor subunit 1 (407 aa).

This sequence belongs to the eukaryotic release factor 1 family. As to quaternary structure, heterodimer of two subunits, one of which binds GTP.

The protein localises to the cytoplasm. Functionally, directs the termination of nascent peptide synthesis (translation) in response to the termination codons UAA, UAG and UGA. In Archaeoglobus fulgidus (strain ATCC 49558 / DSM 4304 / JCM 9628 / NBRC 100126 / VC-16), this protein is Peptide chain release factor subunit 1 (prf1).